A 620-amino-acid polypeptide reads, in one-letter code: Glutathione-regulated potassium-efflux system protein KefC (620 aa).

At 1 to 3 (MDS) the chain is on the periplasmic side. The chain crosses the membrane as a helical span at residues 4–24 (HTLIQALIYLGSAALIVPIAV). A topological domain (cytoplasmic) is located at residue arginine 25. The chain crosses the membrane as a helical span at residues 26–46 (LGLGSVLGYLIAGCIIGPWGL). Residues 47-53 (RLVTDAE) lie on the Periplasmic side of the membrane. The helical transmembrane segment at 54–74 (SILHFAEIGVVLMLFIIGLEL) threads the bilayer. Over 75-89 (DPQRLWKLRAAVFGG) the chain is Cytoplasmic. The chain crosses the membrane as a helical span at residues 90–110 (GALQMVICGGLLGLFCMLLGL). The Periplasmic segment spans residues 111-113 (RWQ). The helical transmembrane segment at 114 to 134 (VAELIGMTLALSSTAIAMQAM) threads the bilayer. The Cytoplasmic portion of the chain corresponds to 135 to 148 (NERNLMVTQMGRSA). The helical transmembrane segment at 149–169 (FAVLLFQDIAAIPLVAMIPLL) threads the bilayer. Over 170 to 177 (AASSASTT) the chain is Periplasmic. The chain crosses the membrane as a helical span at residues 178–198 (MGAFVLSALKVAGALALVVLL). The Cytoplasmic portion of the chain corresponds to 199-213 (GRYVTRPALRFVARS). The helical transmembrane segment at 214–233 (GLREVFSAVALFLVFGFGLL) threads the bilayer. Residues 234 to 236 (LEE) are Periplasmic-facing. Residues 237 to 254 (VGLSMAMGAFLAGVLLAS) traverse the membrane as a helical segment. Residues 255-269 (SEYRHALESDIEPFK) lie on the Cytoplasmic side of the membrane. A helical transmembrane segment spans residues 270 to 290 (GLLLGLFFIGVGMSIDFGTLL). Topologically, residues 291–293 (ENP) are periplasmic. Residues 294–314 (LRIVILLLGFLIIKIAMLWLI) form a helical membrane-spanning segment. Residues 315–326 (ARPLQVPNKQRR) lie on the Cytoplasmic side of the membrane. A helical membrane pass occupies residues 327 to 347 (WFAVLLGQGSEFAFVVFGAAQ). Topologically, residues 348 to 358 (MANVLEPEWAK) are periplasmic. Residues 359 to 379 (SLTLAVALSMAATPILLVILN) traverse the membrane as a helical segment. Residues 380–620 (RLEQSSTEEA…ADEPETKPSS (241 aa)) are Cytoplasmic-facing. Positions 399–518 (QPRVIIAGFG…AGVEKPERET (120 aa)) constitute an RCK N-terminal domain. Residues 597–620 (GWQGTEEGKHTGNMADEPETKPSS) form a disordered region.

This sequence belongs to the monovalent cation:proton antiporter 2 (CPA2) transporter (TC 2.A.37) family. KefC subfamily. In terms of assembly, homodimer. Interacts with the regulatory subunit KefF.

It is found in the cell inner membrane. Pore-forming subunit of a potassium efflux system that confers protection against electrophiles. Catalyzes K(+)/H(+) antiport. In Escherichia coli O6:H1 (strain CFT073 / ATCC 700928 / UPEC), this protein is Glutathione-regulated potassium-efflux system protein KefC.